The following is a 62-amino-acid chain: MAKKAKGNRVQVILECTEHKESGMPGMSRYITTKNRKNTTQRLELMKYNPVLKKMTLHKEIK.

It belongs to the bacterial ribosomal protein bL33 family.

The sequence is that of Large ribosomal subunit protein bL33 from Parabacteroides distasonis (strain ATCC 8503 / DSM 20701 / CIP 104284 / JCM 5825 / NCTC 11152).